Reading from the N-terminus, the 395-residue chain is Dihydroorotate dehydrogenase (quinone), mitochondrial (395 aa).

A mitochondrion; not cleaved-targeting transit peptide spans 1–10 (MAWRHLKKRA). Residues 1-10 (MAWRHLKKRA) are Mitochondrial matrix-facing. Residues 11 to 30 (QDAVIILGGGGLLFASYLMA) form a helical membrane-spanning segment. At 31-395 (TGDERFYAEH…TDAIGADHRR (365 aa)) the chain is on the mitochondrial intermembrane side. Residues 95–99 (AGFDK) and Ser-119 each bind FMN. Position 99 (Lys-99) interacts with substrate. Residue 144–148 (NRYGF) coordinates substrate. Residues Asn-180 and Asn-211 each coordinate FMN. 211-216 (NVSSPN) is a substrate binding site. Ser-214 (nucleophile) is an active-site residue. FMN-binding residues include Lys-254 and Thr-282. 283 to 284 (NT) serves as a coordination point for substrate. Residues Gly-305, Gly-334, and 355–356 (YT) each bind FMN.

Belongs to the dihydroorotate dehydrogenase family. Type 2 subfamily. As to quaternary structure, monomer. The cofactor is FMN. In terms of processing, the uncleaved transit peptide is required for mitochondrial targeting and proper membrane integration.

Its subcellular location is the mitochondrion inner membrane. The enzyme catalyses (S)-dihydroorotate + a quinone = orotate + a quinol. Its pathway is pyrimidine metabolism; UMP biosynthesis via de novo pathway; orotate from (S)-dihydroorotate (quinone route): step 1/1. Its function is as follows. Catalyzes the conversion of dihydroorotate to orotate with quinone as electron acceptor. Required for UMP biosynthesis via de novo pathway. The protein is Dihydroorotate dehydrogenase (quinone), mitochondrial (DHODH) of Homo sapiens (Human).